The sequence spans 459 residues: UDP-N-acetylmuramoylalanine--D-glutamate ligase (459 aa).

131–137 (GANGKST) is a binding site for ATP.

This sequence belongs to the MurCDEF family.

The protein localises to the cytoplasm. The catalysed reaction is UDP-N-acetyl-alpha-D-muramoyl-L-alanine + D-glutamate + ATP = UDP-N-acetyl-alpha-D-muramoyl-L-alanyl-D-glutamate + ADP + phosphate + H(+). The protein operates within cell wall biogenesis; peptidoglycan biosynthesis. Functionally, cell wall formation. Catalyzes the addition of glutamate to the nucleotide precursor UDP-N-acetylmuramoyl-L-alanine (UMA). The chain is UDP-N-acetylmuramoylalanine--D-glutamate ligase from Methylococcus capsulatus (strain ATCC 33009 / NCIMB 11132 / Bath).